The following is a 145-amino-acid chain: Sec-independent protein translocase protein TatB (145 aa).

A helical transmembrane segment spans residues 1 to 21; that stretch reads MLDVGMTELLCFAIIAILVLG.

Belongs to the TatB family. In terms of assembly, the Tat system comprises two distinct complexes: a TatABC complex, containing multiple copies of TatA, TatB and TatC subunits, and a separate TatA complex, containing only TatA subunits. Substrates initially bind to the TatABC complex, which probably triggers association of the separate TatA complex to form the active translocon.

Its subcellular location is the cell inner membrane. Its function is as follows. Part of the twin-arginine translocation (Tat) system that transports large folded proteins containing a characteristic twin-arginine motif in their signal peptide across membranes. Together with TatC, TatB is part of a receptor directly interacting with Tat signal peptides. TatB may form an oligomeric binding site that transiently accommodates folded Tat precursor proteins before their translocation. The sequence is that of Sec-independent protein translocase protein TatB from Acinetobacter baumannii (strain ATCC 17978 / DSM 105126 / CIP 53.77 / LMG 1025 / NCDC KC755 / 5377).